A 598-amino-acid chain; its full sequence is Probable translation initiation factor IF-2 (598 aa).

Residues 3 to 225 (LRCPIVSVLG…GLAQKFLEQK (223 aa)) form the tr-type G domain. The segment at 12–19 (GHVDHGKT) is G1. 12-19 (GHVDHGKT) lines the GTP pocket. Positions 37–41 (GITQH) are G2. The interval 76-79 (DTPG) is G3. GTP contacts are provided by residues 76–80 (DTPGH) and 130–133 (NKLD). The G4 stretch occupies residues 130–133 (NKLD). The tract at residues 200-202 (SAI) is G5.

The protein belongs to the TRAFAC class translation factor GTPase superfamily. Classic translation factor GTPase family. IF-2 subfamily.

In terms of biological role, function in general translation initiation by promoting the binding of the formylmethionine-tRNA to ribosomes. Seems to function along with eIF-2. The chain is Probable translation initiation factor IF-2 from Methanococcus vannielii (strain ATCC 35089 / DSM 1224 / JCM 13029 / OCM 148 / SB).